Here is a 119-residue protein sequence, read N- to C-terminus: Chorion class B protein M2807 (119 aa).

Residues 1-11 form a left arm region; that stretch reads GGLGGGCGRGF. A central domain region spans residues 12–80; the sequence is SGGGLPVATA…GNGAVGITRE (69 aa). The tract at residues 81-119 is right arm (Gly-rich tandem repeats); the sequence is GGLGYGAGYGDGYGLGYGGYGGGYGLGYGGYGGCGCGCG.

The protein belongs to the chorion protein family.

In terms of biological role, this protein is one of many from the eggshell of the silk moth. The protein is Chorion class B protein M2807 of Bombyx mori (Silk moth).